We begin with the raw amino-acid sequence, 265 residues long: Speedy protein E13 (265 aa).

A disordered region spans residues 1–80; that stretch reads MGQILGKIMM…EPEKELAPEP (80 aa). Residues 66 to 80 show a composition bias toward acidic residues; the sequence is DESDDEPEKELAPEP.

The protein belongs to the Speedy/Ringo family.

The protein is Speedy protein E13 of Homo sapiens (Human).